The following is a 146-amino-acid chain: Globin (146 aa).

Ala1 is subject to N-acetylalanine. Residues 1 to 146 form the Globin domain; sequence ALSAAEAEVV…IIDAMKKAGK (146 aa). His95 contributes to the heme b binding site.

This sequence belongs to the globin family. In terms of assembly, monomer.

The chain is Globin from Dolabella auricularia (Shoulderblade sea cat).